Reading from the N-terminus, the 754-residue chain is 5-methyltetrahydropteroyltriglutamate--homocysteine methyltransferase (754 aa).

Residues R17 to K20 and K117 contribute to the 5-methyltetrahydropteroyltri-L-glutamate site. Residues I431 to S433 and E484 contribute to the L-homocysteine site. L-methionine-binding positions include I431–S433 and E484. 5-methyltetrahydropteroyltri-L-glutamate is bound by residues R515 to C516 and W561. D599 lines the L-homocysteine pocket. D599 provides a ligand contact to L-methionine. E605 lines the 5-methyltetrahydropteroyltri-L-glutamate pocket. 3 residues coordinate Zn(2+): H641, C643, and E665. H694 (proton donor) is an active-site residue. C726 contributes to the Zn(2+) binding site.

The protein belongs to the vitamin-B12 independent methionine synthase family. Zn(2+) serves as cofactor.

It catalyses the reaction 5-methyltetrahydropteroyltri-L-glutamate + L-homocysteine = tetrahydropteroyltri-L-glutamate + L-methionine. It functions in the pathway amino-acid biosynthesis; L-methionine biosynthesis via de novo pathway; L-methionine from L-homocysteine (MetE route): step 1/1. Catalyzes the transfer of a methyl group from 5-methyltetrahydrofolate to homocysteine resulting in methionine formation. The protein is 5-methyltetrahydropteroyltriglutamate--homocysteine methyltransferase of Salmonella choleraesuis (strain SC-B67).